We begin with the raw amino-acid sequence, 485 residues long: uncharacterized protein (485 aa).

Residues 151–201 form a disordered region; the sequence is IKAPTNNSQSGDGNGGTNNDNLLGTFDIREKSNGKKGESNGKQGNGQDKKT. Positions 155-174 are enriched in low complexity; it reads TNNSQSGDGNGGTNNDNLLG. Basic and acidic residues predominate over residues 177–189; that stretch reads DIREKSNGKKGES.

It belongs to the MG185/MG260 family.

This is an uncharacterized protein from Mycoplasma pneumoniae (strain ATCC 29342 / M129 / Subtype 1) (Mycoplasmoides pneumoniae).